We begin with the raw amino-acid sequence, 352 residues long: N-acetyl-gamma-glutamyl-phosphate reductase (352 aa).

The active site involves Cys155.

This sequence belongs to the NAGSA dehydrogenase family. Type 1 subfamily.

Its subcellular location is the cytoplasm. It carries out the reaction N-acetyl-L-glutamate 5-semialdehyde + phosphate + NADP(+) = N-acetyl-L-glutamyl 5-phosphate + NADPH + H(+). Its pathway is amino-acid biosynthesis; L-arginine biosynthesis; N(2)-acetyl-L-ornithine from L-glutamate: step 3/4. Catalyzes the NADPH-dependent reduction of N-acetyl-5-glutamyl phosphate to yield N-acetyl-L-glutamate 5-semialdehyde. The protein is N-acetyl-gamma-glutamyl-phosphate reductase of Crocosphaera subtropica (strain ATCC 51142 / BH68) (Cyanothece sp. (strain ATCC 51142)).